The primary structure comprises 193 residues: Holliday junction branch migration complex subunit RuvA (193 aa).

A domain I region spans residues 1–64 (MIGRIAGILL…EDAHLLYGFL (64 aa)). The segment at 65–139 (TPQERTTFRE…GKLGADLGAL (75 aa)) is domain II. Residues 139-143 (LAGAA) are flexible linker. Residues 144-193 (SASDHATDILNALLALGYSEKEGLAAIKNVPAGTGVSEGIKLALKALSKA) form a domain III region.

This sequence belongs to the RuvA family. In terms of assembly, homotetramer. Forms an RuvA(8)-RuvB(12)-Holliday junction (HJ) complex. HJ DNA is sandwiched between 2 RuvA tetramers; dsDNA enters through RuvA and exits via RuvB. An RuvB hexamer assembles on each DNA strand where it exits the tetramer. Each RuvB hexamer is contacted by two RuvA subunits (via domain III) on 2 adjacent RuvB subunits; this complex drives branch migration. In the full resolvosome a probable DNA-RuvA(4)-RuvB(12)-RuvC(2) complex forms which resolves the HJ.

The protein localises to the cytoplasm. Functionally, the RuvA-RuvB-RuvC complex processes Holliday junction (HJ) DNA during genetic recombination and DNA repair, while the RuvA-RuvB complex plays an important role in the rescue of blocked DNA replication forks via replication fork reversal (RFR). RuvA specifically binds to HJ cruciform DNA, conferring on it an open structure. The RuvB hexamer acts as an ATP-dependent pump, pulling dsDNA into and through the RuvAB complex. HJ branch migration allows RuvC to scan DNA until it finds its consensus sequence, where it cleaves and resolves the cruciform DNA. In Burkholderia cenocepacia (strain HI2424), this protein is Holliday junction branch migration complex subunit RuvA.